Here is a 264-residue protein sequence, read N- to C-terminus: Zinc transporter ZupT (264 aa).

5 consecutive transmembrane segments (helical) span residues A8–V28, F36–I56, W75–I95, G121–I141, and S148–V168. Fe(2+)-binding residues include N132 and E135. Zn(2+) contacts are provided by E135 and H160. Positions 161, 164, and 193 each coordinate Fe(2+). E164 is a binding site for Zn(2+). Helical transmembrane passes span A197 to F217, A219 to Y239, and L244 to I264.

Belongs to the ZIP transporter (TC 2.A.5) family. ZupT subfamily.

It localises to the cell membrane. The enzyme catalyses Zn(2+)(in) = Zn(2+)(out). In terms of biological role, mediates zinc uptake. May also transport other divalent cations. The chain is Zinc transporter ZupT from Streptococcus mutans serotype c (strain ATCC 700610 / UA159).